The primary structure comprises 834 residues: Transcription intermediary factor 1-beta (834 aa).

Ala-2 is modified (N-acetylalanine). A compositionally biased stretch (low complexity) spans 13-23 (AATAASAASGS). The segment at 13 to 56 (AATAASAASGSPGSGEGSAGGEKRPAASSAAAASAAASSPAGGG) is disordered. A phosphoserine mark is found at Ser-23, Ser-26, and Ser-30. Residue Lys-35 forms a Glycyl lysine isopeptide (Lys-Gly) (interchain with G-Cter in SUMO2) linkage. Over residues 38 to 52 (AASSAAAASAAASSP) the composition is skewed to low complexity. Phosphoserine is present on Ser-51. The RING-type zinc finger occupies 66–122 (CGVCRERLRPERDPRLLPCLHSACSACLGPATPAAANNSGDGGSAGDGAMVDCPVCK). Residue Lys-128 forms a Glycyl lysine isopeptide (Lys-Gly) (interchain with G-Cter in SUMO2) linkage. Ser-139 is modified (phosphoserine). A B box-type 1 zinc finger spans residues 149–196 (DANQCCTSCEDNAPATSYCVECSEPLCETCVEAHQRVKYTKDHTVRST). The Zn(2+) site is built by Cys-154, Cys-157, Cys-178, and His-182. A Glycyl lysine isopeptide (Lys-Gly) (interchain with G-Cter in SUMO2) cross-link involves residue Lys-200. Residues 205-246 (ERTVYCNVHKHEPLVLFCESCDTLTCRDCQLNAHKDHQYQFL) form a B box-type 2 zinc finger. Zn(2+) contacts are provided by Cys-210, His-213, Cys-233, and His-238. The leucine zipper alpha helical coiled-coil region stretch occupies residues 247 to 377 (EDAVRNQRKL…LIYFQLHRAL (131 aa)). The tract at residues 248–377 (DAVRNQRKLL…LIYFQLHRAL (130 aa)) is interaction with MAGEC2. Glycyl lysine isopeptide (Lys-Gly) (interchain with G-Cter in SUMO2) cross-links involve residues Lys-255 and Lys-262. Lys-267 bears the N6-acetyllysine mark. Lys-273 is covalently cross-linked (Glycyl lysine isopeptide (Lys-Gly) (interchain with G-Cter in SUMO2)). Lys-305 carries the post-translational modification N6-acetyllysine; alternate. A Glycyl lysine isopeptide (Lys-Gly) (interchain with G-Cter in SUMO2); alternate cross-link involves residue Lys-305. Lys-320 is covalently cross-linked (Glycyl lysine isopeptide (Lys-Gly) (interchain with G-Cter in SUMO2)). The residue at position 341 (Lys-341) is an N6-acetyllysine. Lys-367 is covalently cross-linked (Glycyl lysine isopeptide (Lys-Gly) (interchain with G-Cter in SUMO2)). An involved in binding PPP1CA region spans residues 367–371 (KLIYF). An N6-acetyllysine; alternate modification is found at Lys-378. Lys-378 participates in a covalent cross-link: Glycyl lysine isopeptide (Lys-Gly) (interchain with G-Cter in SUMO2); alternate. Residue Lys-378 forms a Glycyl lysine isopeptide (Lys-Gly) (interchain with G-Cter in SUMO1); alternate linkage. Residue Lys-408 forms a Glycyl lysine isopeptide (Lys-Gly) (interchain with G-Cter in SUMO2) linkage. Residues 412 to 480 (ERPGTNSTGP…SRSGEGEVSG (69 aa)) are disordered. Ser-418 bears the Phosphoserine mark. Residue Lys-435 forms a Glycyl lysine isopeptide (Lys-Gly) (interchain with G-Cter in SUMO2) linkage. Residues 435–444 (KQGSGSSQPM) show a composition bias toward polar residues. Residues Ser-438, Ser-440, and Ser-454 each carry the phosphoserine modification. A Glycyl lysine isopeptide (Lys-Gly) (interchain with G-Cter in SUMO2); alternate cross-link involves residue Lys-469. Lys-469 participates in a covalent cross-link: Glycyl lysine isopeptide (Lys-Gly) (interchain with G-Cter in SUMO1); alternate. Arg-470 carries the citrulline modification. Ser-471 carries the post-translational modification Phosphoserine. At Arg-472 the chain carries Citrulline. A phosphoserine mark is found at Ser-473, Ser-479, and Ser-489. The interval 476 to 513 (GEVSGLLRKVPRVSLERLDLDLTSDSQPPVFKVFPGST) is HP1 box. The short motif at 481–494 (LLRKVPRVSLERLD) is the PxVxL motif element. Phosphothreonine is present on Thr-498. Ser-501 is subject to Phosphoserine. Lys-507 is covalently cross-linked (Glycyl lysine isopeptide (Lys-Gly) (interchain with G-Cter in SUMO2)). A Glycyl lysine isopeptide (Lys-Gly) (interchain with G-Cter in SUMO2); alternate cross-link involves residue Lys-554. Lys-554 is covalently cross-linked (Glycyl lysine isopeptide (Lys-Gly) (interchain with G-Cter in SUMO); alternate). Lys-575 participates in a covalent cross-link: Glycyl lysine isopeptide (Lys-Gly) (interchain with G-Cter in SUMO2). Residues 581 to 602 (LTEGPGAEGPRLASPSGSTSSG) are disordered. Phosphoserine is present on Ser-594. The PHD-type zinc finger occupies 625 to 672 (ATICRVCQKPGDLVMCNQCEFCFHLDCHLPALQDVPGEEWSCSLCHVL). Lys-676 is covalently cross-linked (Glycyl lysine isopeptide (Lys-Gly) (interchain with G-Cter in SUMO)). A phosphoserine mark is found at Ser-683, Ser-689, and Ser-697. Residues 695 to 799 (KLSPANQRKC…RFFETRMNDA (105 aa)) enclose the Bromo domain. Lys-750 participates in a covalent cross-link: Glycyl lysine isopeptide (Lys-Gly) (interchain with G-Cter in SUMO2); alternate. A Glycyl lysine isopeptide (Lys-Gly) (interchain with G-Cter in SUMO1); alternate cross-link involves residue Lys-750. Residue Lys-750 forms a Glycyl lysine isopeptide (Lys-Gly) (interchain with G-Cter in SUMO); alternate linkage. Phosphoserine is present on Ser-752. Tyr-755 bears the Phosphotyrosine mark. Position 757 is a phosphoserine (Ser-757). Residues Lys-770, Lys-774, and Lys-779 each carry the N6-acetyllysine; alternate modification. Residues Lys-770, Lys-774, and Lys-779 each participate in a glycyl lysine isopeptide (Lys-Gly) (interchain with G-Cter in SUMO2); alternate cross-link. Lys-779 participates in a covalent cross-link: Glycyl lysine isopeptide (Lys-Gly) (interchain with G-Cter in SUMO1); alternate. A Phosphoserine modification is found at Ser-784. A Glycyl lysine isopeptide (Lys-Gly) (interchain with G-Cter in SUMO2) cross-link involves residue Lys-804. A Phosphoserine; by ATM and ATR and dsDNA kinase modification is found at Ser-824.

Belongs to the TRIM/RBCC family. As to quaternary structure, oligomer; the RBCC domain homotrimerizes and interacts with one molecule of KRAB to form the KRAB-KAP1 corepressor complex. Interacts with SETX. Binding to a KRAB domain is an absolute requirement for silencing gene expression. Interacts with a number of KRAB-ZFP proteins including ZNF10, ZFP53, ZFP68, ZNF382 and ZNF256. Interacts with NCOR1, NR3C1 and CHD3. Interacts with CEBPB (via the RING-type and PHD-type zinc fingers). Interacts with CBX5 (via the PxVxL motif); the interaction occurs in interphase nuclei and competes for binding POGZ. Interacts with POGZ; the interaction competes for interaction with CBX5. Interacts with SETDB1; the interaction is enhanced by KAP1 sumoylation, stimulates SETDB1 histone methyltransferase activity and gene silencing. Interacts (via the PHD-type zinc finger) with UBE2I; the interaction is required for sumoylation and repressor activity. Component of the TRIM28/KAP1-ERBB4-MDM2 complex involved in connecting growth factor and DNA damage responses. Interacts directly with ERBB4; the interaction represses ERBB4-mediated transcription activity. Interacts with MDM2; the interaction contributes to p53/TP53 inactivation. Component of the TRIM28/KAP1-MDM2-p53/TP53; involved in regulating p53/TP53 stabilization and activity. Interacts (via the leucine zipper alpha helical coiled-coil) with E2F1 (central region); the interaction inhibits E2F1 acetylation and transcriptional activity. Interacts with PPP1CA; the interaction dephosphorylates TRIM28 at Ser-824 and forms a complex at the p21 promoter site. Interacts with PPP1CB; the interaction is weak but is increased on dephosphorylation at Ser-824. Interacts with CEBPB and NR3C1. Interacts with CBX5 (via the PxVxL motif); the interaction occurs in interphase nuclei and competes for binding POGZ. Component of a ternary complex that includes TRIM28, a HP1 protein (CBX1, CBX3 OR CBX5), a KRAB domain-containing protein, and DNA. Interacts with SMARCAD1. Interacts with, and sumoylates IRF7. Interacts with MAGEC2. Part of a complex composed of TRIM28, HDAC1, HDAC2 and EHMT2. Interacts (via the RBCC domain) with KOX1 (via the KRAB domain), ZNF268 (via the KRAB domain) and ZNF300 (via the KRAB domain); the interactions increase KOX1, ZNF268 and ZNF300 nuclear localization activities. Interacts with AICDA. The large PER complex involved in the histone methylation is composed of at least PER2, CBX3, TRIM28, SUV39H1 and/or SUV39H2; CBX3 mediates the formation of the complex. Interacts with NR4A3; the interactions potentiates NR4A3 activity on NurRE promoter. Interacts (unphosphorylated or phosphorylated form) with ZBTB1 (via BTB domain). Probably part of a corepressor complex containing ZNF304, TRIM28, SETDB1 and DNMT1. Interacts with ATRX. Forms a complex with ATRX, SETDB1 and ZNF274. Interacts with ZFP568; the interaction mediates ZFP568 transcriptional repression activity. Interacts with RRP1B. Interacts with CRY1. Interacts with ZNF263; recruited to the SIX3 promoter along with other proteins involved in chromatin modification and transcriptional corepression where it contributes to transcriptional repression. Interacts with CYREN (via XLF motif). Interacts with TRIM17; this interaction prevents TRIM28 activity. Interacts with ZNF746. Interacts with PHF13. Interacts with ZNF354C. Interacts with ZNF432; the interaction is independent of PARP1. In terms of processing, ATM-induced phosphorylation on Ser-824 represses sumoylation leading to the de-repression of expression of a subset of genes involved in cell cycle control and apoptosis in response to genotoxic stress. Dephosphorylation by the phosphatases, PPP1CA and PP1CB forms, allows sumoylation and expression of TRIM28 target genes. Sumoylation/desumoylation events regulate TRIM28-mediated transcriptional repression. Sumoylation is required for interaction with CHD3 and SETDB1 and the corepressor activity. Represses and is repressed by Ser-824 phosphorylation. Enhances the TRIM28 corepressor activity, inhibiting transcriptional activity of a number of genes including GADD45A and CDKN1A/p21. Lys-554, Lys-779 and Lys-804 are the major sites of sumoylation. In response to Dox-induced DNA damage, enhanced phosphorylation on Ser-824 prevents sumoylation and allows de-repression of CDKN1A/p21. Post-translationally, auto-ubiquitinated; enhanced by MAGEA2 and MAGEC2. In terms of processing, citrullinated by PADI4. ADP-ribosylated by SIRT6, promoting TRIM28/KAP1 interaction with CBX5, thereby contributing to the packaging of LINE-1 retrotransposon elements into transcriptionally repressive heterochromatin.

Its subcellular location is the nucleus. It carries out the reaction S-ubiquitinyl-[E2 ubiquitin-conjugating enzyme]-L-cysteine + [acceptor protein]-L-lysine = [E2 ubiquitin-conjugating enzyme]-L-cysteine + N(6)-ubiquitinyl-[acceptor protein]-L-lysine.. It functions in the pathway protein modification; protein sumoylation. In terms of biological role, nuclear corepressor for KRAB domain-containing zinc finger proteins (KRAB-ZFPs). Mediates gene silencing by recruiting CHD3, a subunit of the nucleosome remodeling and deacetylation (NuRD) complex, and SETDB1 (which specifically methylates histone H3 at 'Lys-9' (H3K9me)) to the promoter regions of KRAB target genes. Enhances transcriptional repression by coordinating the increase in H3K9me, the decrease in histone H3 'Lys-9 and 'Lys-14' acetylation (H3K9ac and H3K14ac, respectively) and the disposition of HP1 proteins to silence gene expression. Recruitment of SETDB1 induces heterochromatinization. May play a role as a coactivator for CEBPB and NR3C1 in the transcriptional activation of ORM1. Also a corepressor for ERBB4. Inhibits E2F1 activity by stimulating E2F1-HDAC1 complex formation and inhibiting E2F1 acetylation. May serve as a partial backup to prevent E2F1-mediated apoptosis in the absence of RB1. Important regulator of CDKN1A/p21(CIP1). Has E3 SUMO-protein ligase activity toward itself via its PHD-type zinc finger. Specifically sumoylates IRF7, thereby inhibiting its transactivation activity. Ubiquitinates p53/TP53 leading to its proteasomal degradation; the function is enhanced by MAGEC2 and MAGEA2, and possibly MAGEA3 and MAGEA6. Mediates the nuclear localization of KOX1, ZNF268 and ZNF300 transcription factors. Probably forms a corepressor complex required for activated KRAS-mediated promoter hypermethylation and transcriptional silencing of tumor suppressor genes (TSGs) or other tumor-related genes in colorectal cancer (CRC) cells. Required to maintain a transcriptionally repressive state of genes in undifferentiated embryonic stem cells (ESCs). In ESCs, in collaboration with SETDB1, is also required for H3K9me3 and silencing of endogenous and introduced retroviruses in a DNA-methylation independent-pathway. Associates at promoter regions of tumor suppressor genes (TSGs) leading to their gene silencing. The SETDB1-TRIM28-ZNF274 complex may play a role in recruiting ATRX to the 3'-exons of zinc-finger coding genes with atypical chromatin signatures to establish or maintain/protect H3K9me3 at these transcriptionally active regions. Acts as a corepressor for ZFP568. This chain is Transcription intermediary factor 1-beta, found in Mus musculus (Mouse).